The following is a 102-amino-acid chain: Large ribosomal subunit protein bL21 (102 aa).

It belongs to the bacterial ribosomal protein bL21 family. In terms of assembly, part of the 50S ribosomal subunit. Contacts protein L20.

Its function is as follows. This protein binds to 23S rRNA in the presence of protein L20. In Levilactobacillus brevis (strain ATCC 367 / BCRC 12310 / CIP 105137 / JCM 1170 / LMG 11437 / NCIMB 947 / NCTC 947) (Lactobacillus brevis), this protein is Large ribosomal subunit protein bL21.